Consider the following 114-residue polypeptide: uncharacterized protein (114 aa).

2 helical membrane-spanning segments follow: residues 9 to 29 (LAIF…SFWL) and 75 to 95 (LVHF…VAII).

The protein resides in the cell membrane. This is an uncharacterized protein from Mycoplasma pneumoniae (strain ATCC 29342 / M129 / Subtype 1) (Mycoplasmoides pneumoniae).